Consider the following 170-residue polypeptide: MEGADDIVPMGEVVGLHGVRGWVKVYSHTEPREAILDYPHWYLRRDDGDWVPVERTAGRCQGKGLVAAFRDVEDRDRARAYIGLQIGVPRRDLPELPEGQYYWADLEGLAAYTTGGEPLGRVSHLFATGANDVLVLQGDRERLVPFVYGQTVRRVDLTAGRIELDWDPDF.

The 73-residue stretch at Glu-98–Phe-170 folds into the PRC barrel domain.

The protein belongs to the RimM family. In terms of assembly, binds ribosomal protein uS19.

The protein resides in the cytoplasm. In terms of biological role, an accessory protein needed during the final step in the assembly of 30S ribosomal subunit, possibly for assembly of the head region. Essential for efficient processing of 16S rRNA. May be needed both before and after RbfA during the maturation of 16S rRNA. It has affinity for free ribosomal 30S subunits but not for 70S ribosomes. This Alkalilimnicola ehrlichii (strain ATCC BAA-1101 / DSM 17681 / MLHE-1) protein is Ribosome maturation factor RimM.